Consider the following 170-residue polypeptide: ATP synthase subunit b (170 aa).

The helical transmembrane segment at 22-41 (VLNWAVVVFGLYKFLPGFLG) threads the bilayer.

It belongs to the ATPase B chain family. F-type ATPases have 2 components, F(1) - the catalytic core - and F(0) - the membrane proton channel. F(1) has five subunits: alpha(3), beta(3), gamma(1), delta(1), epsilon(1). F(0) has four main subunits: a(1), b(1), b'(1) and c(10-14). The alpha and beta chains form an alternating ring which encloses part of the gamma chain. F(1) is attached to F(0) by a central stalk formed by the gamma and epsilon chains, while a peripheral stalk is formed by the delta, b and b' chains.

The protein resides in the cellular thylakoid membrane. F(1)F(0) ATP synthase produces ATP from ADP in the presence of a proton or sodium gradient. F-type ATPases consist of two structural domains, F(1) containing the extramembraneous catalytic core and F(0) containing the membrane proton channel, linked together by a central stalk and a peripheral stalk. During catalysis, ATP synthesis in the catalytic domain of F(1) is coupled via a rotary mechanism of the central stalk subunits to proton translocation. Functionally, component of the F(0) channel, it forms part of the peripheral stalk, linking F(1) to F(0). The chain is ATP synthase subunit b from Prochlorococcus marinus subsp. pastoris (strain CCMP1986 / NIES-2087 / MED4).